Reading from the N-terminus, the 138-residue chain is ATP synthase epsilon chain (138 aa).

It belongs to the ATPase epsilon chain family. As to quaternary structure, F-type ATPases have 2 components, CF(1) - the catalytic core - and CF(0) - the membrane proton channel. CF(1) has five subunits: alpha(3), beta(3), gamma(1), delta(1), epsilon(1). CF(0) has three main subunits: a, b and c.

Its subcellular location is the cell membrane. Its function is as follows. Produces ATP from ADP in the presence of a proton gradient across the membrane. The polypeptide is ATP synthase epsilon chain (Streptococcus uberis (strain ATCC BAA-854 / 0140J)).